The following is a 224-amino-acid chain: Urease accessory protein UreF (224 aa).

Belongs to the UreF family. In terms of assembly, ureD, UreF and UreG form a complex that acts as a GTP-hydrolysis-dependent molecular chaperone, activating the urease apoprotein by helping to assemble the nickel containing metallocenter of UreC. The UreE protein probably delivers the nickel.

It is found in the cytoplasm. Its function is as follows. Required for maturation of urease via the functional incorporation of the urease nickel metallocenter. This chain is Urease accessory protein UreF, found in Pseudomonas putida (strain ATCC 47054 / DSM 6125 / CFBP 8728 / NCIMB 11950 / KT2440).